The chain runs to 68 residues: DNA-directed RNA polymerase subunit omega (68 aa).

The protein belongs to the RNA polymerase subunit omega family. The RNAP catalytic core consists of 2 alpha, 1 beta, 1 beta' and 1 omega subunit. When a sigma factor is associated with the core the holoenzyme is formed, which can initiate transcription.

The enzyme catalyses RNA(n) + a ribonucleoside 5'-triphosphate = RNA(n+1) + diphosphate. Functionally, promotes RNA polymerase assembly. Latches the N- and C-terminal regions of the beta' subunit thereby facilitating its interaction with the beta and alpha subunits. In Citrifermentans bemidjiense (strain ATCC BAA-1014 / DSM 16622 / JCM 12645 / Bem) (Geobacter bemidjiensis), this protein is DNA-directed RNA polymerase subunit omega.